The primary structure comprises 229 residues: Large ribosomal subunit protein uL1 (229 aa).

It belongs to the universal ribosomal protein uL1 family. In terms of assembly, part of the 50S ribosomal subunit.

Its function is as follows. Binds directly to 23S rRNA. The L1 stalk is quite mobile in the ribosome, and is involved in E site tRNA release. Functionally, protein L1 is also a translational repressor protein, it controls the translation of the L11 operon by binding to its mRNA. This Caulobacter vibrioides (strain ATCC 19089 / CIP 103742 / CB 15) (Caulobacter crescentus) protein is Large ribosomal subunit protein uL1.